Here is a 177-residue protein sequence, read N- to C-terminus: ATP synthase subunit delta (177 aa).

The protein belongs to the ATPase delta chain family. In terms of assembly, F-type ATPases have 2 components, F(1) - the catalytic core - and F(0) - the membrane proton channel. F(1) has five subunits: alpha(3), beta(3), gamma(1), delta(1), epsilon(1). F(0) has three main subunits: a(1), b(2) and c(10-14). The alpha and beta chains form an alternating ring which encloses part of the gamma chain. F(1) is attached to F(0) by a central stalk formed by the gamma and epsilon chains, while a peripheral stalk is formed by the delta and b chains.

Its subcellular location is the cell inner membrane. F(1)F(0) ATP synthase produces ATP from ADP in the presence of a proton or sodium gradient. F-type ATPases consist of two structural domains, F(1) containing the extramembraneous catalytic core and F(0) containing the membrane proton channel, linked together by a central stalk and a peripheral stalk. During catalysis, ATP synthesis in the catalytic domain of F(1) is coupled via a rotary mechanism of the central stalk subunits to proton translocation. Functionally, this protein is part of the stalk that links CF(0) to CF(1). It either transmits conformational changes from CF(0) to CF(1) or is implicated in proton conduction. The sequence is that of ATP synthase subunit delta from Tolumonas auensis (strain DSM 9187 / NBRC 110442 / TA 4).